The sequence spans 165 residues: Regulatory protein RecX (165 aa).

Belongs to the RecX family.

Its subcellular location is the cytoplasm. Functionally, modulates RecA activity. The protein is Regulatory protein RecX of Cronobacter sakazakii (strain ATCC BAA-894) (Enterobacter sakazakii).